The following is a 287-amino-acid chain: ATP synthase gamma chain (287 aa).

It belongs to the ATPase gamma chain family. F-type ATPases have 2 components, CF(1) - the catalytic core - and CF(0) - the membrane proton channel. CF(1) has five subunits: alpha(3), beta(3), gamma(1), delta(1), epsilon(1). CF(0) has three main subunits: a, b and c.

The protein localises to the cell inner membrane. Produces ATP from ADP in the presence of a proton gradient across the membrane. The gamma chain is believed to be important in regulating ATPase activity and the flow of protons through the CF(0) complex. The chain is ATP synthase gamma chain from Geotalea daltonii (strain DSM 22248 / JCM 15807 / FRC-32) (Geobacter daltonii).